The sequence spans 314 residues: Ribonuclease Z (314 aa).

Residues H63, H65, D67, H68, H142, D205, and H263 each coordinate Zn(2+). Catalysis depends on D67, which acts as the Proton acceptor.

This sequence belongs to the RNase Z family. As to quaternary structure, homodimer. Zn(2+) serves as cofactor.

The catalysed reaction is Endonucleolytic cleavage of RNA, removing extra 3' nucleotides from tRNA precursor, generating 3' termini of tRNAs. A 3'-hydroxy group is left at the tRNA terminus and a 5'-phosphoryl group is left at the trailer molecule.. In terms of biological role, zinc phosphodiesterase, which displays some tRNA 3'-processing endonuclease activity. Probably involved in tRNA maturation, by removing a 3'-trailer from precursor tRNA. In Kineococcus radiotolerans (strain ATCC BAA-149 / DSM 14245 / SRS30216), this protein is Ribonuclease Z.